The following is an 88-amino-acid chain: Small ribosomal subunit protein uS15 (88 aa).

The protein belongs to the universal ribosomal protein uS15 family. In terms of assembly, part of the 30S ribosomal subunit. Forms a bridge to the 50S subunit in the 70S ribosome, contacting the 23S rRNA.

In terms of biological role, one of the primary rRNA binding proteins, it binds directly to 16S rRNA where it helps nucleate assembly of the platform of the 30S subunit by binding and bridging several RNA helices of the 16S rRNA. Functionally, forms an intersubunit bridge (bridge B4) with the 23S rRNA of the 50S subunit in the ribosome. This is Small ribosomal subunit protein uS15 from Geobacter sp. (strain M21).